Reading from the N-terminus, the 402-residue chain is DNA replication and repair protein RecF (402 aa).

Residue 30 to 37 (GYNGIGKT) participates in ATP binding.

It belongs to the RecF family.

Its subcellular location is the cytoplasm. Functionally, the RecF protein is involved in DNA metabolism; it is required for DNA replication and normal SOS inducibility. RecF binds preferentially to single-stranded, linear DNA. It also seems to bind ATP. In Pseudarthrobacter chlorophenolicus (strain ATCC 700700 / DSM 12829 / CIP 107037 / JCM 12360 / KCTC 9906 / NCIMB 13794 / A6) (Arthrobacter chlorophenolicus), this protein is DNA replication and repair protein RecF.